We begin with the raw amino-acid sequence, 510 residues long: MIWHVQNENFILDSTRIFMKAFHLLLFHGSFIFPECILIFGLILLLMIDSTSDQKDIPWLYFISSTSLVISITALLFRWREEPMISFSGNFQTNNFNEIFQFLILLCSTLCIPLSVEYIECTEMAITEFLLFVLTATLGGMFLCGANDLITIFVAPECFSLCSYLLSGYTKRDVRSNEATTKYLLMGGASSSILVHGFSWLYGSSGGEIELQEIVNGLINTQMYNSPGISIALIFITVGIGFKLSPAPSHQWTPDVYEGSPTPVVAFLSVTSKVAASASATRIFDIPFYFSSNEWHLHLEILAILSMILGNLIAITQTSMKRMLAYSSIGQIGYVIIGIIVGDSNDGYASMITYMLFYISMNLGTFARIVSFGLRTGTDNIRDYAGLYTKDPFLALSLALCLLSLGGLPPLAGFFGKLHLFWCGWQAGLYFLVSIGLLTSVVSIYYYLKIIKLLMTGRNQEITPHVRNYRRSPLRSNNSIELSMIVCVIASTIPGISMNPIIAIAQDTLF.

13 consecutive transmembrane segments (helical) span residues 24-44, 57-77, 99-119, 124-144, 149-169, 183-203, 227-247, 295-315, 323-343, 347-367, 395-415, 418-438, and 484-504; these read LLLF…GLIL, IPWL…ALLF, IFQF…VEYI, MAIT…MFLC, LITI…LSGY, YLLM…WLYG, PGIS…LSPA, WHLH…LIAI, MLAY…IVGD, GYAS…GTFA, ALSL…AGFF, LHLF…IGLL, and MIVC…IIAI.

The protein belongs to the complex I subunit 2 family. In terms of assembly, NDH is composed of at least 16 different subunits, 5 of which are encoded in the nucleus.

It is found in the plastid. The protein resides in the chloroplast thylakoid membrane. The enzyme catalyses a plastoquinone + NADH + (n+1) H(+)(in) = a plastoquinol + NAD(+) + n H(+)(out). It carries out the reaction a plastoquinone + NADPH + (n+1) H(+)(in) = a plastoquinol + NADP(+) + n H(+)(out). NDH shuttles electrons from NAD(P)H:plastoquinone, via FMN and iron-sulfur (Fe-S) centers, to quinones in the photosynthetic chain and possibly in a chloroplast respiratory chain. The immediate electron acceptor for the enzyme in this species is believed to be plastoquinone. Couples the redox reaction to proton translocation, and thus conserves the redox energy in a proton gradient. The chain is NAD(P)H-quinone oxidoreductase subunit 2 B, chloroplastic from Buxus microphylla (Littleleaf boxwood).